The sequence spans 139 residues: D-ribose pyranase (139 aa).

Residue H20 is the Proton donor of the active site. Residues D28, H106, and 128–130 (YAN) each bind substrate.

Belongs to the RbsD / FucU family. RbsD subfamily. In terms of assembly, homodecamer.

The protein resides in the cytoplasm. The enzyme catalyses beta-D-ribopyranose = beta-D-ribofuranose. The protein operates within carbohydrate metabolism; D-ribose degradation; D-ribose 5-phosphate from beta-D-ribopyranose: step 1/2. Functionally, catalyzes the interconversion of beta-pyran and beta-furan forms of D-ribose. This is D-ribose pyranase from Enterobacter sp. (strain 638).